The chain runs to 343 residues: Holliday junction branch migration complex subunit RuvB (343 aa).

A large ATPase domain (RuvB-L) region spans residues 1–185 (MMNENLDATG…FGISSRLQYY (185 aa)). ATP-binding positions include L24, R25, G66, K69, T70, T71, 132–134 (EDY), R175, Y185, and R222. T70 is a binding site for Mg(2+). Positions 186–256 (STELLSGIVE…IAKFGLKALN (71 aa)) are small ATPAse domain (RuvB-S). Positions 259-343 (AHGLDEMDNK…GSNQGGLFDN (85 aa)) are head domain (RuvB-H). DNA-binding residues include R314 and R319.

Belongs to the RuvB family. As to quaternary structure, homohexamer. Forms an RuvA(8)-RuvB(12)-Holliday junction (HJ) complex. HJ DNA is sandwiched between 2 RuvA tetramers; dsDNA enters through RuvA and exits via RuvB. An RuvB hexamer assembles on each DNA strand where it exits the tetramer. Each RuvB hexamer is contacted by two RuvA subunits (via domain III) on 2 adjacent RuvB subunits; this complex drives branch migration. In the full resolvosome a probable DNA-RuvA(4)-RuvB(12)-RuvC(2) complex forms which resolves the HJ.

The protein localises to the cytoplasm. It catalyses the reaction ATP + H2O = ADP + phosphate + H(+). Functionally, the RuvA-RuvB-RuvC complex processes Holliday junction (HJ) DNA during genetic recombination and DNA repair, while the RuvA-RuvB complex plays an important role in the rescue of blocked DNA replication forks via replication fork reversal (RFR). RuvA specifically binds to HJ cruciform DNA, conferring on it an open structure. The RuvB hexamer acts as an ATP-dependent pump, pulling dsDNA into and through the RuvAB complex. RuvB forms 2 homohexamers on either side of HJ DNA bound by 1 or 2 RuvA tetramers; 4 subunits per hexamer contact DNA at a time. Coordinated motions by a converter formed by DNA-disengaged RuvB subunits stimulates ATP hydrolysis and nucleotide exchange. Immobilization of the converter enables RuvB to convert the ATP-contained energy into a lever motion, pulling 2 nucleotides of DNA out of the RuvA tetramer per ATP hydrolyzed, thus driving DNA branch migration. The RuvB motors rotate together with the DNA substrate, which together with the progressing nucleotide cycle form the mechanistic basis for DNA recombination by continuous HJ branch migration. Branch migration allows RuvC to scan DNA until it finds its consensus sequence, where it cleaves and resolves cruciform DNA. In Christiangramia forsetii (strain DSM 17595 / CGMCC 1.15422 / KT0803) (Gramella forsetii), this protein is Holliday junction branch migration complex subunit RuvB.